The chain runs to 885 residues: Protein PTHB1 (885 aa).

The segment at 1–406 is seven-bladed beta-propeller; that stretch reads MSLFKARDWW…LQGVWPLTEQ (406 aa). The segment at 684-764 is interaction with LZTL1; sequence RDKTPAPLQH…FLPLQEDTQE (81 aa).

In terms of assembly, part of BBSome complex, that contains BBS1, BBS2, BBS4, BBS5, BBS7, BBS8/TTC8, BBS9 and BBIP10. Interacts with LZTL1; the interaction mediates the association of LZTL1 with the BBsome complex and regulates BBSome ciliary trafficking.

Its subcellular location is the cell projection. The protein resides in the cilium membrane. The protein localises to the cytoplasm. It is found in the cytoskeleton. It localises to the microtubule organizing center. Its subcellular location is the centrosome. The protein resides in the centriolar satellite. The BBSome complex is thought to function as a coat complex required for sorting of specific membrane proteins to the primary cilia. The BBSome complex is required for ciliogenesis but is dispensable for centriolar satellite function. This ciliogenic function is mediated in part by the Rab8 GDP/GTP exchange factor, which localizes to the basal body and contacts the BBSome. Rab8(GTP) enters the primary cilium and promotes extension of the ciliary membrane. Firstly the BBSome associates with the ciliary membrane and binds to RAB3IP/Rabin8, the guanosyl exchange factor (GEF) for Rab8 and then the Rab8-GTP localizes to the cilium and promotes docking and fusion of carrier vesicles to the base of the ciliary membrane. Required for proper BBSome complex assembly and its ciliary localization. The polypeptide is Protein PTHB1 (Bbs9) (Mus musculus (Mouse)).